The chain runs to 448 residues: Chromosomal replication initiator protein DnaA (448 aa).

The interval 1-72 (MPDLQELWNY…VEGAYEFAEI (72 aa)) is domain I, interacts with DnaA modulators. Residues 72-110 (IELTPIFVLPGESDNLTPLEPEEEHVLTKAETPTFLRET) form a domain II region. The domain III, AAA+ region stretch occupies residues 111–327 (HLNSKYTFDT…GALVRVQAYA (217 aa)). ATP is bound by residues glycine 155, glycine 157, lysine 158, and threonine 159. Residues 328-448 (TMQNAEITTS…ILDLKNTMKS (121 aa)) are domain IV, binds dsDNA.

This sequence belongs to the DnaA family. As to quaternary structure, oligomerizes as a right-handed, spiral filament on DNA at oriC.

The protein localises to the cytoplasm. In terms of biological role, plays an essential role in the initiation and regulation of chromosomal replication. ATP-DnaA binds to the origin of replication (oriC) to initiate formation of the DNA replication initiation complex once per cell cycle. Binds the DnaA box (a 9 base pair repeat at the origin) and separates the double-stranded (ds)DNA. Forms a right-handed helical filament on oriC DNA; dsDNA binds to the exterior of the filament while single-stranded (ss)DNA is stabiized in the filament's interior. The ATP-DnaA-oriC complex binds and stabilizes one strand of the AT-rich DNA unwinding element (DUE), permitting loading of DNA polymerase. After initiation quickly degrades to an ADP-DnaA complex that is not apt for DNA replication. Binds acidic phospholipids. In Latilactobacillus sakei subsp. sakei (strain 23K) (Lactobacillus sakei subsp. sakei), this protein is Chromosomal replication initiator protein DnaA.